The sequence spans 78 residues: Acyl carrier protein (78 aa).

The 76-residue stretch at 2–77 (SDIAERVKKI…DAIKFLEKNS (76 aa)) folds into the Carrier domain. S37 bears the O-(pantetheine 4'-phosphoryl)serine mark.

Belongs to the acyl carrier protein (ACP) family. Post-translationally, 4'-phosphopantetheine is transferred from CoA to a specific serine of apo-ACP by AcpS. This modification is essential for activity because fatty acids are bound in thioester linkage to the sulfhydryl of the prosthetic group.

The protein localises to the cytoplasm. It functions in the pathway lipid metabolism; fatty acid biosynthesis. Carrier of the growing fatty acid chain in fatty acid biosynthesis. In Methylorubrum extorquens (strain CM4 / NCIMB 13688) (Methylobacterium extorquens), this protein is Acyl carrier protein.